Reading from the N-terminus, the 91-residue chain is Small ribosomal subunit protein uS19 (91 aa).

It belongs to the universal ribosomal protein uS19 family.

Protein S19 forms a complex with S13 that binds strongly to the 16S ribosomal RNA. This Prochlorococcus marinus (strain MIT 9211) protein is Small ribosomal subunit protein uS19.